Here is a 119-residue protein sequence, read N- to C-terminus: Odin profilin (119 aa).

It belongs to the Asgard profilin family.

Its subcellular location is the cytoplasm. It is found in the cytoskeleton. Its activity is regulated as follows. Inhibition of rabbit actin polymerization is reduced by phosphatidylinositol-(4,5)-P2(1,2-dipalmitoyl), a soluble form of the phospholipid phosphatidylinositol, suggesting an unknown lipid might regulate actin-profilin interaction in vivo. Its function is as follows. Binds to actin and affects the structure of the cytoskeleton. At high concentrations inhibits spontaneous rabbit actin nucleation. This strongly suggests this archaea has a profilin-regulated actin system, and actin-type genes can be identified in this organism. The polypeptide is Odin profilin (Odinarchaeota yellowstonii (strain LCB_4)).